The following is a 95-amino-acid chain: Large ribosomal subunit protein bL25 (95 aa).

The protein belongs to the bacterial ribosomal protein bL25 family. In terms of assembly, part of the 50S ribosomal subunit; part of the 5S rRNA/L5/L18/L25 subcomplex. Contacts the 5S rRNA. Binds to the 5S rRNA independently of L5 and L18.

In terms of biological role, this is one of the proteins that binds to the 5S RNA in the ribosome where it forms part of the central protuberance. In Shewanella woodyi (strain ATCC 51908 / MS32), this protein is Large ribosomal subunit protein bL25.